A 469-amino-acid chain; its full sequence is NADH-quinone oxidoreductase subunit 13 (469 aa).

The next 14 helical transmembrane spans lie at 1-21 (MVVL…LGLP), 23-43 (ALGV…FLTH), 47-67 (VAHA…AFGL), 69-89 (GLSA…ALVA), 91-111 (VEGR…GLFA), 115-135 (LLVF…MLYL), 144-164 (ALYT…AAVL), 190-210 (AFWV…LFPL), 258-278 (GLLL…AFAA), 284-304 (LLAY…FSGT), 308-328 (AMGG…LFLL), 354-374 (LAAL…LSGF), 390-410 (WLAA…LTAF), and 430-450 (WGFA…PGYF).

The protein belongs to the complex I subunit 4 family. In terms of assembly, NDH-1 is composed of 15 different subunits, Nqo1 to Nqo15. The complex has a L-shaped structure, with the hydrophobic arm (subunits Nqo7, Nqo8 and Nqo10 to Nqo14) embedded in the membrane and the hydrophilic peripheral arm (subunits Nqo1 to Nqo6, Nqo9 and Nqo15) protruding into the bacterial cytoplasm. The hydrophilic domain contains all the redox centers.

The protein resides in the cell inner membrane. It carries out the reaction a quinone + NADH + 5 H(+)(in) = a quinol + NAD(+) + 4 H(+)(out). Its function is as follows. NDH-1 shuttles electrons from NADH, via FMN and iron-sulfur (Fe-S) centers, to quinones in the respiratory chain. The immediate electron acceptor for the enzyme in this species is menaquinone. Couples the redox reaction to proton translocation (for every two electrons transferred, four hydrogen ions are translocated across the cytoplasmic membrane), and thus conserves the redox energy in a proton gradient required for the synthesis of ATP. The sequence is that of NADH-quinone oxidoreductase subunit 13 (nqo13) from Thermus thermophilus (strain ATCC 27634 / DSM 579 / HB8).